A 577-amino-acid chain; its full sequence is Isocitrate dehydrogenase kinase/phosphatase (577 aa).

Residues Ala324 to Leu330 and Lys345 each bind ATP. Asp380 is an active-site residue.

This sequence belongs to the AceK family.

It localises to the cytoplasm. The enzyme catalyses L-seryl-[isocitrate dehydrogenase] + ATP = O-phospho-L-seryl-[isocitrate dehydrogenase] + ADP + H(+). Bifunctional enzyme which can phosphorylate or dephosphorylate isocitrate dehydrogenase (IDH) on a specific serine residue. This is a regulatory mechanism which enables bacteria to bypass the Krebs cycle via the glyoxylate shunt in response to the source of carbon. When bacteria are grown on glucose, IDH is fully active and unphosphorylated, but when grown on acetate or ethanol, the activity of IDH declines drastically concomitant with its phosphorylation. The sequence is that of Isocitrate dehydrogenase kinase/phosphatase from Pseudoalteromonas atlantica (strain T6c / ATCC BAA-1087).